Reading from the N-terminus, the 157-residue chain is 3-hydroxybutyryl-CoA dehydratase (157 aa).

The MaoC-like domain maps to Lys-22–Ala-120.

It carries out the reaction (3R)-3-hydroxybutanoyl-CoA = (2E)-butenoyl-CoA + H2O. Involved in the regeneration of glyoxylate from a molecule of acetyl-CoA. The protein is 3-hydroxybutyryl-CoA dehydratase of Methylorubrum extorquens (strain ATCC 14718 / DSM 1338 / JCM 2805 / NCIMB 9133 / AM1) (Methylobacterium extorquens).